Here is a 316-residue protein sequence, read N- to C-terminus: 4-hydroxy-3-methylbut-2-enyl diphosphate reductase (316 aa).

[4Fe-4S] cluster is bound at residue Cys12. Residues His43 and His81 each contribute to the (2E)-4-hydroxy-3-methylbut-2-enyl diphosphate site. 2 residues coordinate dimethylallyl diphosphate: His43 and His81. Positions 43 and 81 each coordinate isopentenyl diphosphate. Cys103 contacts [4Fe-4S] cluster. A (2E)-4-hydroxy-3-methylbut-2-enyl diphosphate-binding site is contributed by His131. His131 is a binding site for dimethylallyl diphosphate. His131 lines the isopentenyl diphosphate pocket. Residue Glu133 is the Proton donor of the active site. Thr170 is a binding site for (2E)-4-hydroxy-3-methylbut-2-enyl diphosphate. Cys198 contacts [4Fe-4S] cluster. Residues Ser226, Asn228, and Ser271 each contribute to the (2E)-4-hydroxy-3-methylbut-2-enyl diphosphate site. Dimethylallyl diphosphate is bound by residues Ser226, Asn228, and Ser271. 3 residues coordinate isopentenyl diphosphate: Ser226, Asn228, and Ser271.

This sequence belongs to the IspH family. [4Fe-4S] cluster serves as cofactor.

The catalysed reaction is isopentenyl diphosphate + 2 oxidized [2Fe-2S]-[ferredoxin] + H2O = (2E)-4-hydroxy-3-methylbut-2-enyl diphosphate + 2 reduced [2Fe-2S]-[ferredoxin] + 2 H(+). It carries out the reaction dimethylallyl diphosphate + 2 oxidized [2Fe-2S]-[ferredoxin] + H2O = (2E)-4-hydroxy-3-methylbut-2-enyl diphosphate + 2 reduced [2Fe-2S]-[ferredoxin] + 2 H(+). Its pathway is isoprenoid biosynthesis; dimethylallyl diphosphate biosynthesis; dimethylallyl diphosphate from (2E)-4-hydroxy-3-methylbutenyl diphosphate: step 1/1. It functions in the pathway isoprenoid biosynthesis; isopentenyl diphosphate biosynthesis via DXP pathway; isopentenyl diphosphate from 1-deoxy-D-xylulose 5-phosphate: step 6/6. In terms of biological role, catalyzes the conversion of 1-hydroxy-2-methyl-2-(E)-butenyl 4-diphosphate (HMBPP) into a mixture of isopentenyl diphosphate (IPP) and dimethylallyl diphosphate (DMAPP). Acts in the terminal step of the DOXP/MEP pathway for isoprenoid precursor biosynthesis. This Bacillus thuringiensis (strain Al Hakam) protein is 4-hydroxy-3-methylbut-2-enyl diphosphate reductase.